The sequence spans 259 residues: Emerin (259 aa).

Met-1 bears the N-acetylmethionine mark. Positions 1 to 45 constitute an LEM domain; it reads MDDYAVLSDTELAAVLRQYNIPHGPIVGSTRKLYEKKIFEYETQR. Phosphoserine occurs at positions 8, 29, 54, 72, 88, 99, 141, and 142. The tract at residues 46–223 is interaction with F-actin; it reads RRLLPPNSSS…PAAALGQDRQ (178 aa). Residue Tyr-161 is modified to Phosphotyrosine. The segment at 168 to 187 is interaction with CTNNB1; sequence RPISNVSRSSLGLSYYPTSS. Phosphoserine occurs at positions 171, 174, and 176. A helical transmembrane segment spans residues 224–244; the sequence is VPLWGQLLLFLVFAAFLLFVY.

Interacts with lamins A and C, BANF1, GMCL, BCLAF1 and YTHDC1/YT521. Interacts with TMEM43; the interaction retains emerin in the inner nuclear membrane. Interacts with ACTB, SPTAN1, F-actin, CTNNB1 and beta-tubulin. Interacts with SUN1 and SUN2. Interacts with TMEM201. Interacts with NEMP1. As to expression, in the ovary, highest expression is seen in primordial follicle oocytes (at protein level). Detected in embryonic fibroblasts, skeletal muscle, heart muscle and tongue epithelium (at protein level). Widely expressed.

It localises to the nucleus inner membrane. The protein resides in the nucleus outer membrane. In terms of biological role, stabilizes and promotes the formation of a nuclear actin cortical network. Stimulates actin polymerization in vitro by binding and stabilizing the pointed end of growing filaments. Inhibits beta-catenin activity by preventing its accumulation in the nucleus. Acts by influencing the nuclear accumulation of beta-catenin through a CRM1-dependent export pathway. Links centrosomes to the nuclear envelope via a microtubule association. Required for proper localization of non-farnesylated prelamin-A/C. Together with NEMP1, contributes to nuclear envelope stiffness in germ cells. This is Emerin (Emd) from Mus musculus (Mouse).